The primary structure comprises 314 residues: Olfactory receptor 5F1 (314 aa).

The Extracellular portion of the chain corresponds to 1–25; sequence MTRKNYTSLTEFVLLGLADTLELQI. Residue Asn-5 is glycosylated (N-linked (GlcNAc...) asparagine). A helical transmembrane segment spans residues 26 to 46; the sequence is ILFLFFLVIYTLTVLGNLGMI. At 47-54 the chain is on the cytoplasmic side; sequence LLIRIDSQ. The helical transmembrane segment at 55 to 75 threads the bilayer; sequence LHTPMYFFLANLSFVDVCNST. Residues 76-99 lie on the Extracellular side of the membrane; that stretch reads TITPKMLADLLSEKKTISFAGCFL. An intrachain disulfide couples Cys-97 to Cys-189. A helical membrane pass occupies residues 100 to 120; it reads QMYFFISLATTECILFGLMAY. Residues 121 to 139 are Cytoplasmic-facing; that stretch reads DRYAAICRPLLYSLIMSRT. The chain crosses the membrane as a helical span at residues 140-160; sequence VYLKMAAGAFAAGLLNFMVNT. At 161–196 the chain is on the extracellular side; the sequence is SHVSSLSFCDSNVIHHFFCDSPPLFKLSCSDTILKE. A helical transmembrane segment spans residues 197-217; it reads SISSILAGVNIVGTLLVILSS. Residues 218-237 are Cytoplasmic-facing; the sequence is YSYVLFSIFSMHSGEGRHRA. The helical transmembrane segment at 238 to 258 threads the bilayer; it reads FSTCASHLTAIILFYATCIYT. Residues 259–271 lie on the Extracellular side of the membrane; it reads YLRPSSSYSLNQD. A helical transmembrane segment spans residues 272 to 292; that stretch reads KVASVFYTVVIPMLNPLIYSL. At 293 to 314 the chain is on the cytoplasmic side; the sequence is RSKEVKKALANVISRKRTSSFL.

This sequence belongs to the G-protein coupled receptor 1 family.

The protein resides in the cell membrane. Odorant receptor. In Homo sapiens (Human), this protein is Olfactory receptor 5F1 (OR5F1).